The following is a 124-amino-acid chain: Seripauperin-3 (124 aa).

The helical transmembrane segment at 7–24 (IAAGVAAIAAGIAAAPAT) threads the bilayer.

Belongs to the SRP1/TIP1 family. Seripauperin subfamily.

The protein localises to the membrane. This is Seripauperin-3 (PAU3) from Saccharomyces cerevisiae (strain ATCC 204508 / S288c) (Baker's yeast).